We begin with the raw amino-acid sequence, 23 residues long: Hemocyanin subunit 4 (23 aa).

The protein belongs to the tyrosinase family. Hemocyanin subfamily. Hemolymph.

It localises to the secreted. Its subcellular location is the extracellular space. In terms of biological role, hemocyanins are copper-containing oxygen carriers occurring freely dissolved in the hemolymph of many mollusks and arthropods. In Carcinus maenas (Common shore crab), this protein is Hemocyanin subunit 4.